A 364-amino-acid polypeptide reads, in one-letter code: DNA polymerase IV (364 aa).

The UmuC domain occupies 14–198 (IIHIDMDAFF…LPIEKFHGVG (185 aa)). Residues D18 and D116 each coordinate Mg(2+). The active site involves E117.

Belongs to the DNA polymerase type-Y family. Monomer. Requires Mg(2+) as cofactor.

It localises to the cytoplasm. The catalysed reaction is DNA(n) + a 2'-deoxyribonucleoside 5'-triphosphate = DNA(n+1) + diphosphate. Its function is as follows. Poorly processive, error-prone DNA polymerase involved in untargeted mutagenesis. Copies undamaged DNA at stalled replication forks, which arise in vivo from mismatched or misaligned primer ends. These misaligned primers can be extended by PolIV. Exhibits no 3'-5' exonuclease (proofreading) activity. May be involved in translesional synthesis, in conjunction with the beta clamp from PolIII. The polypeptide is DNA polymerase IV (Streptococcus pyogenes serotype M28 (strain MGAS6180)).